Here is a 250-residue protein sequence, read N- to C-terminus: ATP synthase subunit a (250 aa).

The next 6 membrane-spanning stretches (helical) occupy residues 25 to 45 (VSFT…FFFL), 84 to 104 (VFFP…VIGL), 115 to 135 (IVVT…YGFY), 141 to 161 (FLHL…IVLI), 187 to 209 (ALKV…WLGA), and 223 to 243 (ELLV…IYLN).

Belongs to the ATPase A chain family. In terms of assembly, F-type ATPases have 2 components, CF(1) - the catalytic core - and CF(0) - the membrane proton channel. CF(1) has five subunits: alpha(3), beta(3), gamma(1), delta(1), epsilon(1). CF(0) has three main subunits: a(1), b(2) and c(9-12). The alpha and beta chains form an alternating ring which encloses part of the gamma chain. CF(1) is attached to CF(0) by a central stalk formed by the gamma and epsilon chains, while a peripheral stalk is formed by the delta and b chains.

It localises to the cell inner membrane. Functionally, key component of the proton channel; it plays a direct role in the translocation of protons across the membrane. The polypeptide is ATP synthase subunit a (Azorhizobium caulinodans (strain ATCC 43989 / DSM 5975 / JCM 20966 / LMG 6465 / NBRC 14845 / NCIMB 13405 / ORS 571)).